Reading from the N-terminus, the 723-residue chain is MASGRGASSRWFFTREQLENTPSRRCGVEADEELSHRQQAANLIQDMGQRLNVSQLTINTAIVYMHRFYMHHSFTKFNRNIISPTALFLAAKVEEQARKLEHVIKVAHACLHPLEPLLDTKCDAYLQQTQELVLLETIMLQTLGFEITIEHPHTDVVKCTQLVRASKDLAQTSYFMATNSLHLTTFCLQYKPTVIACVCIHLACKWSNWEIPVSTDGKHWWEYVDPTVTLELLDELTHEFLQILEKTPSRLKRIRNWRAMAKKPKVDGQVSETPLLGSSLVQNSILVDSVTGVPANPSFQKPSTSTFPAPIPLNSGSTSVQDSRASDNLSVLAAGMPSTSYSLSSHQEWPQHPDSARTDPVYTQKQEATLSGSQYISFQQGPSMALHSGLHHRPDKVADHSSAKQEYTHKAGSSKHHGPIPATPGMLPQKMSLDKYREKRKLETLDVDTRDHYLAAHAEQQHKHGPAQAVTGTSVTSPIKMKLPLTNSDRPEKHVAEKKERSGSLKLRIPIPPPDKGPSKEELKMKIKVASSERHSSSDEGSGKSKHSSPHISRDHKEKHKEHPANRHHSSHKYLHMHSGGSKHTADGMPPTVLRSPVGLGPEGVSSASSARKKLHSSEASHNHHSKMSKSSKSAGSSSSSSSVKQYLSSHSSVFNHPLPPPPPVTYQVGYGHLSTLVKLDKKPVEPHGPEANHEYSTSSQHMDYKDTFDMLDSLLSAQGMNM.

An interaction with MDFIC and MDFI region spans residues 1–298 (MASGRGASSR…SVTGVPANPS (298 aa)). Residues 12 to 147 (FFTREQLENT…IMLQTLGFEI (136 aa)) enclose the Cyclin N-terminal domain. An interaction with POLR2A region spans residues 250–298 (RLKRIRNWRAMAKKPKVDGQVSETPLLGSSLVQNSILVDSVTGVPANPS). 2 stretches are compositionally biased toward polar residues: residues 297 to 307 (PSFQKPSTSTF) and 314 to 325 (NSGSTSVQDSRA). 4 disordered regions span residues 297-325 (PSFQ…DSRA), 340-364 (SYSL…VYTQ), 385-428 (ALHS…GMLP), and 458-645 (AEQQ…SSVK). Residues 395–409 (DKVADHSSAKQEYTH) are compositionally biased toward basic and acidic residues. A Glycyl lysine isopeptide (Lys-Gly) (interchain with G-Cter in SUMO2) cross-link involves residue Lys-404. Residue Ser-477 is modified to Phosphoserine. Composition is skewed to basic and acidic residues over residues 489–503 (DRPE…ERSG), 517–543 (GPSK…EGSG), and 552–565 (ISRD…EHPA). Positions 566-576 (NRHHSSHKYLH) are enriched in basic residues. Ser-596 is modified (phosphoserine). Low complexity predominate over residues 631–645 (SSKSAGSSSSSSSVK).

The protein belongs to the cyclin family. Cyclin C subfamily. In terms of assembly, interacts with CDK9 to form P-TEFb. Interacts with POLR2A (via the C-terminal domain (CTD)); mediates transcriptional activity. Interacts with HEXIM1; mediates formation of a tripartite complex with KPNA2. Interacts with HEXIM2. Interacts with PKN1; enhances MYOD1-dependent transcription. P-TEFB complex interacts with RB1; promotes phosphorylation of RB1. P-TEFB complex interacts with MYOD1; promotes the transcriptional activity of MYOD1 through its CDK9-mediated phosphorylation. Interacts with MDFI and MDFIC. As to expression, highly expressed in all phases of skeletal muscle differentiation, particularly in later stages. Highly expressed in skeletal muscle. Significantly expressed in heart, brain, kidney, liver, testis, and pancreas.

The protein localises to the cytoplasm. It localises to the perinuclear region. Its subcellular location is the nucleus. Functionally, regulatory subunit of the cyclin-dependent kinase pair (CDK9/cyclin T) complex, also called positive transcription elongation factor B (P-TEFB), which is proposed to facilitate the transition from abortive to production elongation by phosphorylating the CTD (carboxy-terminal domain) of the large subunit of RNA polymerase II (RNAP II). The activity of this complex is regulated by binding with 7SK snRNA. Plays a role during muscle differentiation; P-TEFB complex interacts with MYOD1; this tripartite complex promotes the transcriptional activity of MYOD1 through its CDK9-mediated phosphorylation and binds the chromatin of promoters and enhancers of muscle-specific genes; this event correlates with hyperphosphorylation of the CTD domain of RNA pol II. In addition, enhances MYOD1-dependent transcription through interaction with PKN1. Involved in early embryo development. The chain is Cyclin-T2 from Mus musculus (Mouse).